Reading from the N-terminus, the 212-residue chain is MFAEYGVLNYWTYLVGAIFIVLVPGPNTLFVLKNSVSSGMKGGYLAACGVFIGDAVLMFLAWAGVATLIKTTPILFNIVRYLGAFYLLYLGSKILYATLKGKNSETKSDEPQYGAIFKRALILSLTNPKAILFYVSFFVQFIDVNAPHTGISFFILATTLELVSFCYLSFLIISGAFVTQYIRTKKKLAKVGNSLIGLMFVGFAARLATLQS.

Transmembrane regions (helical) follow at residues 12–32 (TYLVGAIFIVLVPGPNTLFVL), 49–69 (GVFIGDAVLMFLAWAGVATLI), 71–91 (TTPILFNIVRYLGAFYLLYLG), 122–142 (ILSLTNPKAILFYVSFFVQFI), 153–173 (FFILATTLELVSFCYLSFLII), and 188–208 (LAKVGNSLIGLMFVGFAARLA).

It belongs to the Rht family.

Its subcellular location is the cell inner membrane. The enzyme catalyses L-leucine(in) + H(+)(out) = L-leucine(out) + H(+)(in). Functionally, exporter of leucine. The sequence is that of Leucine efflux protein (leuE) from Escherichia coli O6:K15:H31 (strain 536 / UPEC).